The following is a 199-amino-acid chain: Superoxide dismutase [Mn/Fe] (199 aa).

Histidine 27, histidine 81, aspartate 161, and histidine 165 together coordinate Fe(3+). Residues histidine 27, histidine 81, aspartate 161, and histidine 165 each contribute to the Mn(2+) site.

Belongs to the iron/manganese superoxide dismutase family. In terms of assembly, homodimer. The cofactor is Mn(2+). Fe(3+) serves as cofactor.

The catalysed reaction is 2 superoxide + 2 H(+) = H2O2 + O2. Functionally, destroys superoxide anion radicals which are normally produced within the cells and which are toxic to biological systems. Catalyzes the dismutation of superoxide anion radicals into O2 and H2O2 by successive reduction and oxidation of the transition metal ion at the active site. The chain is Superoxide dismutase [Mn/Fe] (sodA) from Staphylococcus epidermidis.